The following is a 906-amino-acid chain: UPF0182 protein CA_C0010 (906 aa).

The next 7 helical transmembrane spans lie at 7-29, 47-69, 96-118, 153-175, 208-230, 250-272, and 279-301; these read IVTIILFLLVIVGSFGKVTDFII, LAAILKLMIPIFIIIYTGLWFYY, VAIVIDVIASFFVAYFTSSVYWY, LYGVMLLFLIFMAVLTVILYIVL, FAIISGLIMFLVAVGYAIRSFNL, LVFYVIIIAAAIVSSVVIFTSII, and IFVSIVAILILIIGQSITAEIVQ. Over residues 842–862 the composition is skewed to low complexity; sequence NSSNNQSETRTETGGTSTDSS. The tract at residues 842–875 is disordered; it reads NSSNNQSETRTETGGTSTDSSNNKDKLKQAQDLY.

Belongs to the UPF0182 family.

It localises to the cell membrane. The sequence is that of UPF0182 protein CA_C0010 from Clostridium acetobutylicum (strain ATCC 824 / DSM 792 / JCM 1419 / IAM 19013 / LMG 5710 / NBRC 13948 / NRRL B-527 / VKM B-1787 / 2291 / W).